Consider the following 146-residue polypeptide: Protein SprT-like (146 aa).

Residues 4 to 142 (NEYVKQVSLE…GRCKGKLRLL (139 aa)) form the SprT-like domain. Residue His64 participates in Zn(2+) binding. The active site involves Glu65. His68 serves as a coordination point for Zn(2+).

Belongs to the SprT family. The cofactor is Zn(2+).

It localises to the cytoplasm. The chain is Protein SprT-like from Streptococcus gordonii (strain Challis / ATCC 35105 / BCRC 15272 / CH1 / DL1 / V288).